The sequence spans 649 residues: Leucine-rich repeat transmembrane protein FLRT3 (649 aa).

The first 28 residues, 1–28, serve as a signal peptide directing secretion; sequence MISPAWSLFLIGTKIGLFFQVAPLSVMA. Positions 29–58 constitute an LRRNT domain; sequence KSCPSVCRCDAGFIYCNDRSLTSIPVGIPE. At 29 to 528 the chain is on the extracellular side; it reads KSCPSVCRCD…KEPYKNPNLP (500 aa). 2 cysteine pairs are disulfide-bonded: Cys-31/Cys-37 and Cys-35/Cys-44. The segment at 38–67 is interaction with ADGRL3; that stretch reads DAGFIYCNDRSLTSIPVGIPEDATTLYLQN. 10 LRR repeats span residues 59–80, 84–104, 105–126, 129–150, 155–176, 177–197, 200–220, 226–247, 248–269, and 272–293; these read DATT…SDLK, KVQR…NLPK, YVKE…SLSK, YLEE…EGAF, YLRL…LPRT, IEEL…SLHG, SLKR…GDKV, NLTE…LPGT, SLRK…AFSY, and QLYR…IFDD. Asn-226 is a glycosylation site (N-linked (GlcNAc...) asparagine). Asn-282 and Asn-296 each carry an N-linked (GlcNAc...) asparagine glycan. The region spanning 305-357 is the LRRCT domain; it reads NPWYCGCKMKWVRDWLQSLPVKVNVRGLMCQAPEKVRGMAIKDLSAELFDCKD. Residues Cys-309 and Cys-334 are joined by a disulfide bond. The segment at 378-405 is disordered; sequence QGQWPAPVTKQPDIKNPKLTKDQRTTGS. Over residues 389–401 the composition is skewed to basic and acidic residues; the sequence is PDIKNPKLTKDQR. One can recognise a Fibronectin type-III domain in the interval 405–504; it reads SPSRKTILIT…VCIETQTAPL (100 aa). A helical transmembrane segment spans residues 529–549; that stretch reads LAAIIGGAVALVSIALLALVC. Residues 550 to 649 lie on the Cytoplasmic side of the membrane; it reads WYVHRNGSLF…GIPDLDHSHS (100 aa). The interval 629–649 is disordered; that stretch reads ESSSNRSYRDSGIPDLDHSHS.

As to quaternary structure, monomer and homodimer. Self-associates (via leucine-rich repeats), giving rise to homooligomers. Interacts with FGFR1. Interacts (via extracellular domain) with ADGRL1/LPHN1 and ADGRL3 (via olfactomedin-like domain). Interacts (via extracellular domain) with LPHN2 (via olfactomedin-like domain). Interacts (via extracellular domain) with UNC5B (via Ig domain). May also interact (via extracellular domain) with UNC5A and UNC5C. Interacts (via extracellular domain) with UNC5D (via extracellular domain). Identified in complexes composed of FLRT3, ADGRL3 and UNC5B, respectively FLRT3, ADGRL3 and UNC5D. Interacts (via cytoplasmic domain) with ROBO1. In terms of processing, N-glycosylated. Post-translationally, proteolytic cleavage in the juxtamembrane region gives rise to a soluble ectodomain. Cleavage is probably effected by a metalloprotease. In terms of tissue distribution, detected in brain (at protein level). Detected in brain neurons, especially in basal ganglia, hippocampus dentate gyrus and CA3 region, cerebellum and in olfactory bulb.

It localises to the cell membrane. The protein resides in the presynaptic cell membrane. The protein localises to the synapse. It is found in the synaptosome. Its subcellular location is the postsynaptic density. It localises to the cell projection. The protein resides in the dendrite. The protein localises to the axon. It is found in the growth cone membrane. Its subcellular location is the cytoplasmic vesicle. It localises to the endoplasmic reticulum membrane. The protein resides in the cell junction. The protein localises to the focal adhesion. It is found in the secreted. Functions in cell-cell adhesion, cell migration and axon guidance, exerting an attractive or repulsive role depending on its interaction partners. Plays a role in the spatial organization of brain neurons. Plays a role in vascular development in the retina. Plays a role in cell-cell adhesion via its interaction with ADGRL3 and probably also other latrophilins that are expressed at the surface of adjacent cells. Interaction with the intracellular domain of ROBO1 mediates axon attraction towards cells expressing NTN1. Mediates axon growth cone collapse and plays a repulsive role in neuron guidance via its interaction with UNC5B, and possibly also other UNC-5 family members. Promotes neurite outgrowth (in vitro). Mediates cell-cell contacts that promote an increase both in neurite number and in neurite length. Plays a role in the regulation of the density of glutamaergic synapses. Plays a role in fibroblast growth factor-mediated signaling cascades. Required for normal morphogenesis during embryonic development, but not for normal embryonic patterning. Required for normal ventral closure, headfold fusion and definitive endoderm migration during embryonic development. Required for the formation of a normal basement membrane and the maintenance of a normal anterior visceral endoderm during embryonic development. The polypeptide is Leucine-rich repeat transmembrane protein FLRT3 (Flrt3) (Rattus norvegicus (Rat)).